The primary structure comprises 445 residues: Histidinol dehydrogenase (445 aa).

The NAD(+) site is built by tyrosine 138, glutamine 199, and asparagine 222. The substrate site is built by serine 245, glutamine 267, and histidine 270. 2 residues coordinate Zn(2+): glutamine 267 and histidine 270. Catalysis depends on proton acceptor residues glutamate 335 and histidine 336. Residues histidine 336, aspartate 369, glutamate 423, and histidine 428 each coordinate substrate. Aspartate 369 contributes to the Zn(2+) binding site. Histidine 428 provides a ligand contact to Zn(2+).

Belongs to the histidinol dehydrogenase family. Requires Zn(2+) as cofactor.

It catalyses the reaction L-histidinol + 2 NAD(+) + H2O = L-histidine + 2 NADH + 3 H(+). It participates in amino-acid biosynthesis; L-histidine biosynthesis; L-histidine from 5-phospho-alpha-D-ribose 1-diphosphate: step 9/9. Functionally, catalyzes the sequential NAD-dependent oxidations of L-histidinol to L-histidinaldehyde and then to L-histidine. This is Histidinol dehydrogenase from Burkholderia mallei (strain ATCC 23344).